The primary structure comprises 555 residues: Lysine--tRNA ligase (555 aa).

The 'HIGH' region motif lies at 37-45; sequence TSGRLHVGN. Positions 301-305 match the 'KMSKS' region motif; sequence AMSSS.

Belongs to the class-I aminoacyl-tRNA synthetase family.

It localises to the cytoplasm. It catalyses the reaction tRNA(Lys) + L-lysine + ATP = L-lysyl-tRNA(Lys) + AMP + diphosphate. The polypeptide is Lysine--tRNA ligase (Methanopyrus kandleri (strain AV19 / DSM 6324 / JCM 9639 / NBRC 100938)).